We begin with the raw amino-acid sequence, 130 residues long: Small ribosomal subunit protein uS11 (130 aa).

This sequence belongs to the universal ribosomal protein uS11 family. In terms of assembly, part of the 30S ribosomal subunit. Interacts with proteins S7 and S18. Binds to IF-3.

Functionally, located on the platform of the 30S subunit, it bridges several disparate RNA helices of the 16S rRNA. Forms part of the Shine-Dalgarno cleft in the 70S ribosome. In Psychrobacter sp. (strain PRwf-1), this protein is Small ribosomal subunit protein uS11.